A 255-amino-acid polypeptide reads, in one-letter code: 5'-nucleotidase SurE (255 aa).

The a divalent metal cation site is built by D8, D9, S40, and N93.

The protein belongs to the SurE nucleotidase family. Requires a divalent metal cation as cofactor.

It is found in the cytoplasm. The enzyme catalyses a ribonucleoside 5'-phosphate + H2O = a ribonucleoside + phosphate. In terms of biological role, nucleotidase that shows phosphatase activity on nucleoside 5'-monophosphates. This Rhodopseudomonas palustris (strain HaA2) protein is 5'-nucleotidase SurE.